A 224-amino-acid polypeptide reads, in one-letter code: Large ribosomal subunit protein uL3 (224 aa).

A disordered region spans residues 132-153; sequence SQTKTHGTHEYQRHPGAIGQRK.

This sequence belongs to the universal ribosomal protein uL3 family. Part of the 50S ribosomal subunit. Forms a cluster with proteins L14 and L19.

In terms of biological role, one of the primary rRNA binding proteins, it binds directly near the 3'-end of the 23S rRNA, where it nucleates assembly of the 50S subunit. The sequence is that of Large ribosomal subunit protein uL3 from Myxococcus xanthus (strain DK1622).